The chain runs to 377 residues: Nitric oxide reductase FlRd-NAD(+) reductase (377 aa).

The protein belongs to the FAD-dependent oxidoreductase family. FAD serves as cofactor.

It localises to the cytoplasm. The enzyme catalyses 2 reduced [nitric oxide reductase rubredoxin domain] + NAD(+) + H(+) = 2 oxidized [nitric oxide reductase rubredoxin domain] + NADH. The protein operates within nitrogen metabolism; nitric oxide reduction. In terms of biological role, one of at least two accessory proteins for anaerobic nitric oxide (NO) reductase. Reduces the rubredoxin moiety of NO reductase. The polypeptide is Nitric oxide reductase FlRd-NAD(+) reductase (Escherichia coli O157:H7).